Reading from the N-terminus, the 222-residue chain is Methylthioribulose-1-phosphate dehydratase (222 aa).

The Zn(2+) site is built by His-94 and His-96.

This sequence belongs to the aldolase class II family. MtnB subfamily. Zn(2+) is required as a cofactor.

The catalysed reaction is 5-(methylsulfanyl)-D-ribulose 1-phosphate = 5-methylsulfanyl-2,3-dioxopentyl phosphate + H2O. The protein operates within amino-acid biosynthesis; L-methionine biosynthesis via salvage pathway; L-methionine from S-methyl-5-thio-alpha-D-ribose 1-phosphate: step 2/6. Catalyzes the dehydration of methylthioribulose-1-phosphate (MTRu-1-P) into 2,3-diketo-5-methylthiopentyl-1-phosphate (DK-MTP-1-P). This is Methylthioribulose-1-phosphate dehydratase from Yersinia pseudotuberculosis serotype IB (strain PB1/+).